Reading from the N-terminus, the 105-residue chain is Met repressor (105 aa).

The protein belongs to the MetJ family. In terms of assembly, homodimer.

The protein resides in the cytoplasm. Its function is as follows. This regulatory protein, when combined with SAM (S-adenosylmethionine) represses the expression of the methionine regulon and of enzymes involved in SAM synthesis. This Citrobacter koseri (strain ATCC BAA-895 / CDC 4225-83 / SGSC4696) protein is Met repressor.